We begin with the raw amino-acid sequence, 952 residues long: Leucine--tRNA ligase (952 aa).

Residues 48–58 (PYLNGVLHAGH) carry the 'HIGH' region motif. The short motif at 644-648 (KLSKS) is the 'KMSKS' region element. Lysine 647 contributes to the ATP binding site.

This sequence belongs to the class-I aminoacyl-tRNA synthetase family.

The protein resides in the cytoplasm. It catalyses the reaction tRNA(Leu) + L-leucine + ATP = L-leucyl-tRNA(Leu) + AMP + diphosphate. This Methanococcus vannielii (strain ATCC 35089 / DSM 1224 / JCM 13029 / OCM 148 / SB) protein is Leucine--tRNA ligase.